The primary structure comprises 478 residues: Phosphoglycerate kinase 2, chloroplastic (478 aa).

Residues 1–74 constitute a chloroplast transit peptide; that stretch reads MASTAATAAL…GKGARGVITM (74 aa). The residue at position 78 (S78) is a Phosphoserine. (2R)-3-phosphoglycerate contacts are provided by A96, D97, N99, R113, T135, H136, G138, R139, R194, H226, and R227. G272 contributes to the ADP binding site. G272 provides a ligand contact to CDP. AMP contacts are provided by K274 and K278. K278 contacts ATP. G296 contacts ADP. Residue G296 coordinates CDP. G297 and G369 together coordinate AMP. Positions 297 and 369 each coordinate ATP. Residues G394 and F399 each coordinate CDP. Position 399 (F399) interacts with ADP. An AMP-binding site is contributed by E400. 3 residues coordinate ATP: E400, D431, and S432. D431 provides a ligand contact to Mg(2+).

Belongs to the phosphoglycerate kinase family. As to quaternary structure, monomer. The cofactor is Mg(2+).

It localises to the plastid. The protein resides in the chloroplast. The enzyme catalyses (2R)-3-phosphoglycerate + ATP = (2R)-3-phospho-glyceroyl phosphate + ADP. It participates in carbohydrate biosynthesis; Calvin cycle. In Arabidopsis thaliana (Mouse-ear cress), this protein is Phosphoglycerate kinase 2, chloroplastic.